Here is a 423-residue protein sequence, read N- to C-terminus: Putative competence-damage inducible protein (423 aa).

Belongs to the CinA family.

This chain is Putative competence-damage inducible protein, found in Streptococcus pyogenes serotype M18 (strain MGAS8232).